The sequence spans 643 residues: Extracellular metalloproteinase 4 (643 aa).

A signal peptide spans Met-1 to Ala-18. Residues His-19–Ala-254 constitute a propeptide that is removed on maturation. The segment covering Thr-47–Asp-57 has biased composition (basic and acidic residues). The interval Thr-47–Ser-71 is disordered. Positions Phe-60–Ser-71 are enriched in polar residues. Residues Asn-271 and Asn-420 are each glycosylated (N-linked (GlcNAc...) asparagine). His-437 provides a ligand contact to Zn(2+). Residue Glu-438 is part of the active site. His-441 is a Zn(2+) binding site. A glycan (N-linked (GlcNAc...) asparagine) is linked at Asn-510.

It belongs to the peptidase M36 family. The cofactor is Zn(2+).

The protein localises to the secreted. Secreted metalloproteinase probably acting as a virulence factor. The sequence is that of Extracellular metalloproteinase 4 (MEP4) from Trichophyton equinum (Horse ringworm fungus).